Here is a 197-residue protein sequence, read N- to C-terminus: Dephospho-CoA kinase (197 aa).

One can recognise a DPCK domain in the interval 3-197 (VYGLTGGIGS…QSLLHTHQNT (195 aa)). 11 to 16 (GSGKTT) contributes to the ATP binding site.

The protein belongs to the CoaE family.

The protein resides in the cytoplasm. It carries out the reaction 3'-dephospho-CoA + ATP = ADP + CoA + H(+). Its pathway is cofactor biosynthesis; coenzyme A biosynthesis; CoA from (R)-pantothenate: step 5/5. In terms of biological role, catalyzes the phosphorylation of the 3'-hydroxyl group of dephosphocoenzyme A to form coenzyme A. In Hydrogenovibrio crunogenus (strain DSM 25203 / XCL-2) (Thiomicrospira crunogena), this protein is Dephospho-CoA kinase.